Consider the following 518-residue polypeptide: UNC5C-like protein (518 aa).

Residues 1–10 (MSPQESSVQP) lie on the Extracellular side of the membrane. Residues 11–31 (SQFLLLVGIPVASALLLAQCL) traverse the membrane as a helical; Signal-anchor for type III membrane protein segment. Residues 32 to 518 (RWHCCQWLPG…NHGLELDEKL (487 aa)) are Cytoplasmic-facing. The ZU5 domain occupies 102 to 237 (VFSAREVDHR…FSLYTCVLEA (136 aa)). The segment at 186 to 400 (QQPSQACAYS…ETWAVPPPVS (215 aa)) is interaction with RELA and NFKB1. A peptidase S68 region spans residues 208–235 (PLGQPGTHISRDECRILLSHFSLYTCVL). Catalysis depends on residues His227 and Ser229. Positions 415–494 (QLQMLLEPNS…SAIQNYLNRS (80 aa)) constitute a Death domain.

Belongs to the unc-5 family. As to quaternary structure, interacts with p65/RELA and NFKB1.

The protein resides in the membrane. It is found in the cytoplasm. Its function is as follows. Inhibits NF-kappa-B-dependent transcription by impairing NF-kappa-B binding to its targets. The sequence is that of UNC5C-like protein (Unc5cl) from Mus musculus (Mouse).